Reading from the N-terminus, the 559-residue chain is 2,3-bisphosphoglycerate-independent phosphoglycerate mutase (559 aa).

Mn(2+) contacts are provided by aspartate 28 and serine 81. The active-site Phosphoserine intermediate is the serine 81. Substrate contacts are provided by residues histidine 140, 170–171 (RD), arginine 206, arginine 213, 286–289 (RADR), and lysine 361. 5 residues coordinate Mn(2+): aspartate 430, histidine 434, aspartate 471, histidine 472, and histidine 501.

The protein belongs to the BPG-independent phosphoglycerate mutase family. As to quaternary structure, monomer. It depends on Mn(2+) as a cofactor. In terms of tissue distribution, found ubiquitously in germinating seed.

Its subcellular location is the cytoplasm. It carries out the reaction (2R)-2-phosphoglycerate = (2R)-3-phosphoglycerate. It participates in carbohydrate degradation; glycolysis; pyruvate from D-glyceraldehyde 3-phosphate: step 3/5. Its function is as follows. Catalyzes the interconversion of 2-phosphoglycerate and 3-phosphoglycerate. This chain is 2,3-bisphosphoglycerate-independent phosphoglycerate mutase, found in Nicotiana tabacum (Common tobacco).